The chain runs to 373 residues: Filamin-binding LIM protein 1 (373 aa).

The interval 1–70 (MASKPEKRVA…SPWTTPGRAA (70 aa)) is filamin-binding. Disordered regions lie at residues 41–119 (RPWE…PSEE) and 135–176 (QLHL…PVEK). A compositionally biased stretch (pro residues) spans 104–114 (LPPPPPPPPVL). 3 LIM zinc-binding domains span residues 181-242 (DICA…TLER), 243-300 (CGKC…RKFA), and 301-370 (PVCS…RSAA). Positions 276–373 (IGDESFALGS…HVKRSAAGCC (98 aa)) are FERMT2-binding.

Interacts with NKX2-5. Isoform 1 and isoform 3 interact with FERMT2, FLNA, FLNB and FLNC. Isoform 2 interacts with FLNB. As to expression, isoform 1 and isoform 3 are expressed in heart, kidney, lung, pancreas, placenta and platelets. Isoform 2 is expressed in brain, heart, kidney, lung, pancreas, placenta, skeletal muscle and platelets.

The protein resides in the cell junction. The protein localises to the focal adhesion. It is found in the cytoplasm. Its subcellular location is the cytoskeleton. It localises to the stress fiber. Its function is as follows. Serves as an anchoring site for cell-ECM adhesion proteins and filamin-containing actin filaments. Is implicated in cell shape modulation (spreading) and motility. May participate in the regulation of filamin-mediated cross-linking and stabilization of actin filaments. May also regulate the assembly of filamin-containing signaling complexes that control actin assembly. Promotes dissociation of FLNA from ITGB3 and ITGB7. Promotes activation of integrins and regulates integrin-mediated cell-cell adhesion. This is Filamin-binding LIM protein 1 (FBLIM1) from Homo sapiens (Human).